A 195-amino-acid chain; its full sequence is Interferon tau-1 (195 aa).

An N-terminal signal peptide occupies residues 1 to 23; that stretch reads MAFVLSLLMALVLVSYGPGRSLG. Disulfide bonds link Cys-24-Cys-122 and Cys-52-Cys-162. Asn-101 carries N-linked (GlcNAc...) asparagine glycosylation.

Belongs to the alpha/beta interferon family. IFN-alphaII subfamily. As to expression, constitutively and exclusively expressed in the mononuclear cells of the extraembryonic trophectoderm.

It is found in the secreted. Functionally, paracrine hormone primarily responsible for maternal recognition of pregnancy. Interacts with endometrial receptors, probably type I interferon receptors, and blocks estrogen receptor expression, preventing the estrogen-induced increase in oxytocin receptor expression in the endometrium. This results in the suppression of the pulsatile endometrial release of the luteolytic hormone prostaglandin F2-alpha, hindering the regression of the corpus luteum (luteolysis) and therefore a return to ovarian cyclicity. This, and a possible direct effect of IFN-tau on prostaglandin synthesis, leads in turn to continued ovarian progesterone secretion, which stimulates the secretion by the endometrium of the nutrients required for the growth of the conceptus. In summary, displays particularly high antiviral and antiproliferative potency concurrently with particular weak cytotoxicity, high antiluteolytic activity and immunomodulatory properties. In contrast with other IFNs, IFN-tau is not virally inducible. This Bos taurus (Bovine) protein is Interferon tau-1 (IFNT1).